Reading from the N-terminus, the 201-residue chain is Peptidyl-prolyl cis-trans isomerase FKBP11 (201 aa).

The N-terminal stretch at 1–27 is a signal peptide; it reads MTLSPLLLPLQLLLLLLFSGAVCRAEA. Residues 57 to 144 form the PPIase FKBP-type domain; it reads GDTLHIHYTG…QYDVELIALI (88 aa). A helical membrane pass occupies residues 156–176; it reads ILPLVGIAMVPALLGLIGYHL.

Belongs to the FKBP-type PPIase family. As to quaternary structure, interacts with IFITM5.

The protein resides in the membrane. It carries out the reaction [protein]-peptidylproline (omega=180) = [protein]-peptidylproline (omega=0). PPIases accelerate the folding of proteins during protein synthesis. The polypeptide is Peptidyl-prolyl cis-trans isomerase FKBP11 (Fkbp11) (Mus musculus (Mouse)).